The primary structure comprises 714 residues: Polyribonucleotide nucleotidyltransferase (714 aa).

Positions 488 and 494 each coordinate Mg(2+). The KH domain occupies 555–614 (PRIEVMNIPVDKIREVIGSGGKVIREIVEKTGAKINIDDDGTVKIASASGKEIEAARKWI). The S1 motif domain maps to 624-692 (GQVYEGTVVK…ERGKVRLSMK (69 aa)).

The protein belongs to the polyribonucleotide nucleotidyltransferase family. It depends on Mg(2+) as a cofactor.

Its subcellular location is the cytoplasm. It catalyses the reaction RNA(n+1) + phosphate = RNA(n) + a ribonucleoside 5'-diphosphate. Functionally, involved in mRNA degradation. Catalyzes the phosphorolysis of single-stranded polyribonucleotides processively in the 3'- to 5'-direction. This chain is Polyribonucleotide nucleotidyltransferase, found in Sinorhizobium medicae (strain WSM419) (Ensifer medicae).